Consider the following 256-residue polypeptide: Isoprenyl transferase (256 aa).

Positions 1–22 are disordered; the sequence is MLEKFSKWKGNRSNHTTPSHSL. Asp36 is an active-site residue. Asp36 contributes to the Mg(2+) binding site. Substrate is bound by residues 37–40, Trp41, Arg49, His53, and 81–83; these read GNGR and STE. Asn84 acts as the Proton acceptor in catalysis. Substrate-binding positions include Trp85, Arg87, Arg204, and 210–212; that span reads RLS. Mg(2+) is bound at residue Glu223.

Belongs to the UPP synthase family. As to quaternary structure, homodimer. It depends on Mg(2+) as a cofactor.

Its function is as follows. Catalyzes the condensation of isopentenyl diphosphate (IPP) with allylic pyrophosphates generating different type of terpenoids. In Halalkalibacterium halodurans (strain ATCC BAA-125 / DSM 18197 / FERM 7344 / JCM 9153 / C-125) (Bacillus halodurans), this protein is Isoprenyl transferase.